We begin with the raw amino-acid sequence, 312 residues long: Olfactory receptor 7D2 (312 aa).

Topologically, residues 1-25 (MEAGNQTGFLEFILLGLSEDPELQP) are extracellular. Asn-5 carries N-linked (GlcNAc...) asparagine glycosylation. Residues 26 to 46 (FIFGLFLSMYLVTVLGNLLII) traverse the membrane as a helical segment. Residues 47-54 (LAISSDSH) are Cytoplasmic-facing. Residues 55–75 (LHTPMYFFLSNLSWVDICFST) traverse the membrane as a helical segment. Residues 76–99 (CIVPKMLVNIQTENKAISYMDCLT) lie on the Extracellular side of the membrane. Cys-97 and Cys-189 are disulfide-bonded. A helical transmembrane segment spans residues 100-120 (QVYFSMFFPILDTLLLTVMAY). Residues 121 to 139 (DRFVAVCHPLHYMIIMNPH) are Cytoplasmic-facing. The helical transmembrane segment at 140–160 (LCGLLVFVTWLIGVMTSLLHI) threads the bilayer. Residues 161 to 197 (SLMMHLIFCKDFEIPHFFCELTYILQLACSDTFLNST) are Extracellular-facing. The helical transmembrane segment at 198-217 (LIYFMTGVLGVFPLLGIIFS) threads the bilayer. The Cytoplasmic portion of the chain corresponds to 218–237 (YSRIASSIRKMSSSGGKQKA). Residues 238 to 258 (LSTCGSHLSVVSLFYGTGIGV) form a helical membrane-spanning segment. At 259–271 (HFTSAVTHSSQKI) the chain is on the extracellular side. A helical transmembrane segment spans residues 272 to 292 (SVASVMYTVVTPMLNPFIYSL). The Cytoplasmic segment spans residues 293–312 (RNKDVKGALGSLLSRAASCL).

It belongs to the G-protein coupled receptor 1 family.

It localises to the cell membrane. Its function is as follows. Odorant receptor. In Homo sapiens (Human), this protein is Olfactory receptor 7D2 (OR7D2).